The primary structure comprises 527 residues: Catalase (527 aa).

Positions 1-22 (MADNRDPASDQMKHWKEQRAAQ) are enriched in basic and acidic residues. The disordered stretch occupies residues 1-32 (MADNRDPASDQMKHWKEQRAAQKPDILTTGSG). Residue Ala-2 is modified to N-acetylalanine. Ser-9 is subject to Phosphoserine. The residue at position 13 (Lys-13) is an N6-succinyllysine. Active-site residues include His-75 and Asn-148. Positions 194, 201, 203, and 213 each coordinate NADP(+). The residue at position 221 (Lys-221) is an N6-succinyllysine. Residue Lys-233 is modified to N6-acetyllysine. Residues Lys-237, Trp-303, and His-305 each coordinate NADP(+). Residue Tyr-358 participates in heme binding. Residues Ser-417 and Ser-434 each carry the phosphoserine modification. Residue Lys-480 is modified to N6-acetyllysine; alternate. Lys-480 carries the post-translational modification N6-succinyllysine; alternate. N6-acetyllysine is present on Lys-499. Position 511 is a phosphothreonine (Thr-511). Position 517 is a phosphoserine (Ser-517). The short motif at 524–527 (KANL) is the Microbody targeting signal; atypical element.

Belongs to the catalase family. Homotetramer. Interacts (via microbody targeting signal) with PEX5, monomeric form interacts with PEX5, leading to its translocation into peroxisomes. Heme serves as cofactor. It depends on NADP(+) as a cofactor.

It localises to the peroxisome matrix. It carries out the reaction 2 H2O2 = O2 + 2 H2O. Functionally, catalyzes the degradation of hydrogen peroxide (H(2)O(2)) generated by peroxisomal oxidases to water and oxygen, thereby protecting cells from the toxic effects of hydrogen peroxide. Promotes growth of cells including T-cells, B-cells, myeloid leukemia cells, melanoma cells, mastocytoma cells and normal and transformed fibroblast cells. This chain is Catalase (CAT), found in Sus scrofa (Pig).